The primary structure comprises 446 residues: Enolase (446 aa).

Substrate is bound by residues His164 and Glu173. Glu216 acts as the Proton donor in catalysis. The Mg(2+) site is built by Asp251, Glu302, and Asp329. Residues Glu302 and Asp329 each coordinate substrate. The active-site Proton acceptor is Lys354. Residues Ser381–Ser384 and Lys405 contribute to the substrate site.

It belongs to the enolase family. Homodimer. It depends on Mg(2+) as a cofactor.

It localises to the cytoplasm. The enzyme catalyses (2R)-2-phosphoglycerate = phosphoenolpyruvate + H2O. The protein operates within carbohydrate degradation; glycolysis; pyruvate from D-glyceraldehyde 3-phosphate: step 4/5. This Oryza sativa subsp. japonica (Rice) protein is Enolase (ENO1).